A 704-amino-acid polypeptide reads, in one-letter code: MALHPQAGRPHRDGSEAQAEAAAQDLGRLPSPSKVGAAVCRIQGLGHRAARRPRRGIGTTSASRVPRPGALMPATRNRPRFIHCRGQPPRTRVSSKRSKRSRIHPCHTEVPGWTHEKQMGSSVKERLRPELSQLDQDADDLEEEEAARLPVTSPDGLLMEGDKQPSPGQGPFFYIGGTNGASIISNYCESKGWQRTQDSHCEDYKLKWCEIKCRDNYCSFREGQQLLFQLPNNKLLTTKIGLLSALREHARTLSKARMLPSTQTKVLKMEEFFPETYRLDIRDERQAFFALFDETQMWICKPTASNQGKGIFLIRSQEEAAALQAKTQSIEDDPIYRKMPFRAPQARVVQRYVQNPLLLDGKKFDVRSYMLIACAMPYMVFFGHGYARLTLSLYNPHSSDLSGHLTNQFMQKKSPLYTLLKESTVWTMEHLNRYINDKFRKTKGLPRDWVFTTFTKRMQQIMSHCFLAVKSKLECKLGYFDLIGCDFLIDENFKVWLLEMNANPALHTNCEVLKAVIPGVVIETLDLALETCQKSLHSQKMLPLLSQRRFVLLYNGETTDLWPRLASSRPLNRLPNPNPNPNPNANPHPHPHPNPHPHPNPHPNANPHPPRPTCEAASSALSSARAAISERPGARKSMPSRGAPVCTPRKSRLSDSSGSSIAESEPSLCSGSLEGSRDTAREPSLGPPEEEREEEQRSTSHRGS.

Disordered stretches follow at residues 1-32, 46-125, and 137-170; these read MALHPQAGRPHRDGSEAQAEAAAQDLGRLPSP, GHRA…SVKE, and DADDLEEEEAARLPVTSPDGLLMEGDKQPSPGQG. Over residues 93-105 the composition is skewed to basic residues; that stretch reads VSSKRSKRSRIHP. Basic and acidic residues predominate over residues 114–125; sequence THEKQMGSSVKE. Positions 169 to 540 constitute a TTL domain; it reads QGPFFYIGGT…TCQKSLHSQK (372 aa). ATP-binding positions include lysine 301, 307 to 308, 350 to 353, 363 to 365, and 406 to 407; these read QG, QRYV, KFD, and TN. Residue glutamine 307 coordinates a protein. The Mg(2+) site is built by aspartate 486, glutamate 499, and asparagine 501. The interval 565 to 704 is disordered; sequence LASSRPLNRL…EQRSTSHRGS (140 aa). 2 stretches are compositionally biased toward pro residues: residues 576 to 588 and 596 to 612; these read NPNPNPNPNANPH and HPHPNPHPNANPHPPRP. 2 stretches are compositionally biased toward low complexity: residues 616 to 629 and 654 to 667; these read AASSALSSARAAIS and SDSSGSSIAESEPS.

The cofactor is Mg(2+). In terms of tissue distribution, highly expressed in testis. Expressed in brain, heart, kidney, liver, lung, muscle and trachea.

The protein resides in the cytoplasm. It localises to the cytoskeleton. Its subcellular location is the cell projection. The protein localises to the cilium. It is found in the cilium axoneme. It catalyses the reaction (glycyl)(n)-glycyl-L-glutamyl-[protein] + glycine + ATP = (glycyl)(n+1)-glycyl-L-glutamyl-[protein] + ADP + phosphate + H(+). In terms of biological role, polyglycylase which modifies both tubulin and non-tubulin proteins, generating polyglycine side chains of variable lengths on the gamma-carboxyl groups of specific glutamate residues of target proteins. Involved in the elongation step rather than the initiation step of the polyglycylation reaction. Polyglycylates alpha-tubulin and beta-tubulin. Polyglycylates non-tubulin proteins such as nucleosome assembly protein NAP1. In Mus musculus (Mouse), this protein is Protein polyglycylase TTLL10.